We begin with the raw amino-acid sequence, 430 residues long: Serine--tRNA ligase (430 aa).

Residue 237 to 239 coordinates L-serine; it reads TAE. 268–270 lines the ATP pocket; it reads RSE. Glu-291 contributes to the L-serine binding site. 355 to 358 is an ATP binding site; the sequence is EISS. Ser-391 lines the L-serine pocket.

Belongs to the class-II aminoacyl-tRNA synthetase family. Type-1 seryl-tRNA synthetase subfamily. In terms of assembly, homodimer. The tRNA molecule binds across the dimer.

It localises to the cytoplasm. The catalysed reaction is tRNA(Ser) + L-serine + ATP = L-seryl-tRNA(Ser) + AMP + diphosphate + H(+). The enzyme catalyses tRNA(Sec) + L-serine + ATP = L-seryl-tRNA(Sec) + AMP + diphosphate + H(+). It functions in the pathway aminoacyl-tRNA biosynthesis; selenocysteinyl-tRNA(Sec) biosynthesis; L-seryl-tRNA(Sec) from L-serine and tRNA(Sec): step 1/1. Functionally, catalyzes the attachment of serine to tRNA(Ser). Is also able to aminoacylate tRNA(Sec) with serine, to form the misacylated tRNA L-seryl-tRNA(Sec), which will be further converted into selenocysteinyl-tRNA(Sec). This Klebsiella pneumoniae subsp. pneumoniae (strain ATCC 700721 / MGH 78578) protein is Serine--tRNA ligase.